Consider the following 1185-residue polypeptide: DNA-directed RNA polymerase subunit beta' (1185 aa).

Zn(2+)-binding residues include Cys60, Cys62, Cys75, and Cys78. Mg(2+) contacts are provided by Asp449, Asp451, and Asp453. The Zn(2+) site is built by Cys774, Cys853, Cys860, and Cys863.

Belongs to the RNA polymerase beta' chain family. The RNAP catalytic core consists of 2 alpha, 1 beta, 1 beta' and 1 omega subunit. When a sigma factor is associated with the core the holoenzyme is formed, which can initiate transcription. It depends on Mg(2+) as a cofactor. Requires Zn(2+) as cofactor.

The enzyme catalyses RNA(n) + a ribonucleoside 5'-triphosphate = RNA(n+1) + diphosphate. In terms of biological role, DNA-dependent RNA polymerase catalyzes the transcription of DNA into RNA using the four ribonucleoside triphosphates as substrates. The chain is DNA-directed RNA polymerase subunit beta' from Desulforamulus reducens (strain ATCC BAA-1160 / DSM 100696 / MI-1) (Desulfotomaculum reducens).